A 124-amino-acid polypeptide reads, in one-letter code: Small ribosomal subunit protein bS6 (124 aa).

Positions 96-124 are disordered; the sequence is ETGPSPMMKEVQREEAKKSAATQPSEAQA. A compositionally biased stretch (polar residues) spans 115 to 124; that stretch reads AATQPSEAQA.

This sequence belongs to the bacterial ribosomal protein bS6 family.

Binds together with bS18 to 16S ribosomal RNA. The polypeptide is Small ribosomal subunit protein bS6 (Paraburkholderia phytofirmans (strain DSM 17436 / LMG 22146 / PsJN) (Burkholderia phytofirmans)).